Reading from the N-terminus, the 188-residue chain is Pyridoxal 5'-phosphate synthase subunit PdxT (188 aa).

An L-glutamine-binding site is contributed by 46–48 (GES). Catalysis depends on Cys-78, which acts as the Nucleophile. L-glutamine-binding positions include Arg-105 and 134 to 135 (IR). Catalysis depends on charge relay system residues His-170 and Glu-172.

Belongs to the glutaminase PdxT/SNO family. As to quaternary structure, in the presence of PdxS, forms a dodecamer of heterodimers. Only shows activity in the heterodimer.

It carries out the reaction aldehydo-D-ribose 5-phosphate + D-glyceraldehyde 3-phosphate + L-glutamine = pyridoxal 5'-phosphate + L-glutamate + phosphate + 3 H2O + H(+). It catalyses the reaction L-glutamine + H2O = L-glutamate + NH4(+). It functions in the pathway cofactor biosynthesis; pyridoxal 5'-phosphate biosynthesis. Functionally, catalyzes the hydrolysis of glutamine to glutamate and ammonia as part of the biosynthesis of pyridoxal 5'-phosphate. The resulting ammonia molecule is channeled to the active site of PdxS. This Desulforamulus reducens (strain ATCC BAA-1160 / DSM 100696 / MI-1) (Desulfotomaculum reducens) protein is Pyridoxal 5'-phosphate synthase subunit PdxT.